Consider the following 145-residue polypeptide: 3-hydroxyacyl-[acyl-carrier-protein] dehydratase FabZ (145 aa).

His47 is a catalytic residue.

The protein belongs to the thioester dehydratase family. FabZ subfamily.

The protein localises to the cytoplasm. It carries out the reaction a (3R)-hydroxyacyl-[ACP] = a (2E)-enoyl-[ACP] + H2O. Functionally, involved in unsaturated fatty acids biosynthesis. Catalyzes the dehydration of short chain beta-hydroxyacyl-ACPs and long chain saturated and unsaturated beta-hydroxyacyl-ACPs. This is 3-hydroxyacyl-[acyl-carrier-protein] dehydratase FabZ from Ruthia magnifica subsp. Calyptogena magnifica.